The following is a 615-amino-acid chain: ATP-dependent zinc metalloprotease FtsH 2 (615 aa).

Residues M1–N7 lie on the Cytoplasmic side of the membrane. The helical transmembrane segment at F8–S28 threads the bilayer. Topologically, residues R29–T99 are periplasmic. A helical membrane pass occupies residues F100–Y120. The Cytoplasmic segment spans residues F121–V615. ATP is bound at residue G195–T202. Position 418 (H418) interacts with Zn(2+). The active site involves E419. H422 and D495 together coordinate Zn(2+).

In the central section; belongs to the AAA ATPase family. It in the C-terminal section; belongs to the peptidase M41 family. In terms of assembly, homohexamer. Zn(2+) serves as cofactor.

It is found in the cell inner membrane. In terms of biological role, acts as a processive, ATP-dependent zinc metallopeptidase for both cytoplasmic and membrane proteins. Plays a role in the quality control of integral membrane proteins. The sequence is that of ATP-dependent zinc metalloprotease FtsH 2 from Bdellovibrio bacteriovorus (strain ATCC 15356 / DSM 50701 / NCIMB 9529 / HD100).